The chain runs to 206 residues: 3-demethoxyubiquinol 3-hydroxylase (206 aa).

Residues Glu55, Glu85, His88, Glu137, Glu169, and His172 each contribute to the Fe cation site.

Belongs to the COQ7 family. Requires Fe cation as cofactor.

The protein resides in the cell membrane. It catalyses the reaction a 5-methoxy-2-methyl-3-(all-trans-polyprenyl)benzene-1,4-diol + AH2 + O2 = a 3-demethylubiquinol + A + H2O. It functions in the pathway cofactor biosynthesis; ubiquinone biosynthesis. In terms of biological role, catalyzes the hydroxylation of 2-nonaprenyl-3-methyl-6-methoxy-1,4-benzoquinol during ubiquinone biosynthesis. This is 3-demethoxyubiquinol 3-hydroxylase from Laribacter hongkongensis (strain HLHK9).